Here is a 63-residue protein sequence, read N- to C-terminus: Large ribosomal subunit protein eL37 (63 aa).

The Zn(2+) site is built by Cys20, Cys23, Cys35, and Cys38. The C4-type zinc-finger motif lies at 20–38 (CRRCGRRAFNVKKGYCAAC).

Belongs to the eukaryotic ribosomal protein eL37 family. As to quaternary structure, part of the 50S ribosomal subunit. It depends on Zn(2+) as a cofactor.

In terms of biological role, binds to the 23S rRNA. The sequence is that of Large ribosomal subunit protein eL37 from Thermococcus kodakarensis (strain ATCC BAA-918 / JCM 12380 / KOD1) (Pyrococcus kodakaraensis (strain KOD1)).